The sequence spans 258 residues: Probable S-methyl-5'-thioinosine phosphorylase (258 aa).

53-54 (RH) lines the phosphate pocket. Met180 contacts substrate. Thr181 contacts phosphate. 204–206 (NQA) is a binding site for substrate.

Belongs to the PNP/MTAP phosphorylase family. MTAP subfamily. Homotrimer.

It carries out the reaction S-methyl-5'-thioinosine + phosphate = 5-(methylsulfanyl)-alpha-D-ribose 1-phosphate + hypoxanthine. It functions in the pathway purine metabolism; purine nucleoside salvage. Catalyzes the reversible phosphorylation of S-methyl-5'-thioinosine (MTI) to hypoxanthine and 5-methylthioribose-1-phosphate. Involved in the breakdown of S-methyl-5'-thioadenosine (MTA), a major by-product of polyamine biosynthesis. Catabolism of (MTA) occurs via deamination to MTI and phosphorolysis to hypoxanthine. This is Probable S-methyl-5'-thioinosine phosphorylase from Methanosarcina acetivorans (strain ATCC 35395 / DSM 2834 / JCM 12185 / C2A).